Consider the following 208-residue polypeptide: Large ribosomal subunit protein bL25 (208 aa).

Belongs to the bacterial ribosomal protein bL25 family. CTC subfamily. As to quaternary structure, part of the 50S ribosomal subunit; part of the 5S rRNA/L5/L18/L25 subcomplex. Contacts the 5S rRNA. Binds to the 5S rRNA independently of L5 and L18.

In terms of biological role, this is one of the proteins that binds to the 5S RNA in the ribosome where it forms part of the central protuberance. This Paracoccus denitrificans (strain Pd 1222) protein is Large ribosomal subunit protein bL25.